The primary structure comprises 242 residues: Terpene cyclase dpfgB (242 aa).

The next 7 membrane-spanning stretches (helical) occupy residues 15–37, 51–71, 75–95, 112–132, 141–161, 169–189, and 205–225; these read DVAW…NYVG, ALMA…IYPF, LEMY…YTAV, LPLI…ALAA, AWSA…QLLC, SYFL…QDIL, and LYIW…ICLW.

This sequence belongs to the paxB family.

Its subcellular location is the membrane. It functions in the pathway secondary metabolite biosynthesis; terpenoid biosynthesis. Functionally, terpene cyclase; part of the gene cluster that mediates the biosynthesis of diterpenoid pyrones. The first step of the pathway is the synthesis of the alpha-pyrone moiety by the polyketide synthase dpfgA via condensation of one acetyl-CoA starter unit with 3 malonyl-CoA units and 2 methylations. The alpha-pyrone is then combined with geranylgeranyl pyrophosphate (GGPP) formed by the GGPP synthase dpfgD through the action of the prenyltransferase dpfgC to yield a linear alpha-pyrone diterpenoid. Subsequent steps in the diterpenoid pyrone biosynthetic pathway involve the decalin core formation, which is initiated by the epoxidation of the C10-C11 olefin by the FAD-dependent oxidoreductase dpfgE, and is followed by a cyclization cascade catalyzed by the terpene cyclase dpfgB. The short chain dehydrogenase/reductase dpfgG then oxidizes the 8S hydroxy group to a ketone and the short chain dehydrogenase/reductase dpfgH reduces the ketone to the 8R hydroxy group to yield higginsianin B. Higginsianin B is further methylated by the methyltransferase dpfgI to produce the intermediate named FDDP B. The cytochrome P450 monooxygenase dfgpJ then catalyzes a three-step oxidation at C-27 to generate a carboxylic acid as well as C-26 hydroxylation. Finally, methyltransferase dpfgK methylates the carboxylic acid generated by dpfgJ, yielding the final diterpenoid pyrones from the pathway which were named FDDP D and FDDP E. This chain is Terpene cyclase dpfgB, found in Gibberella zeae (strain ATCC MYA-4620 / CBS 123657 / FGSC 9075 / NRRL 31084 / PH-1) (Wheat head blight fungus).